A 555-amino-acid chain; its full sequence is CTP synthase (555 aa).

Residues 1-265 form an amidoligase domain region; the sequence is MTRYIFITGG…GNRVCEKLNI (265 aa). Residue Ser-13 participates in CTP binding. Ser-13 contributes to the UTP binding site. Residues 14–19 and Asp-71 each bind ATP; that span reads SLGKGI. The Mg(2+) site is built by Asp-71 and Glu-139. CTP-binding positions include 146-148, 186-191, and Lys-222; these read DIE and KTKPTQ. UTP-binding positions include 186 to 191 and Lys-222; that span reads KTKPTQ. A Glutamine amidotransferase type-1 domain is found at 290–541; it reads TVAVVGKYVD…IKAGLAAKEA (252 aa). Gly-351 provides a ligand contact to L-glutamine. Cys-378 serves as the catalytic Nucleophile; for glutamine hydrolysis. L-glutamine is bound by residues 379-382, Glu-402, and Arg-469; that span reads LGMQ. Residues His-514 and Glu-516 contribute to the active site.

It belongs to the CTP synthase family. In terms of assembly, homotetramer.

The enzyme catalyses UTP + L-glutamine + ATP + H2O = CTP + L-glutamate + ADP + phosphate + 2 H(+). It carries out the reaction L-glutamine + H2O = L-glutamate + NH4(+). The catalysed reaction is UTP + NH4(+) + ATP = CTP + ADP + phosphate + 2 H(+). Its pathway is pyrimidine metabolism; CTP biosynthesis via de novo pathway; CTP from UDP: step 2/2. Its activity is regulated as follows. Allosterically activated by GTP, when glutamine is the substrate; GTP has no effect on the reaction when ammonia is the substrate. The allosteric effector GTP functions by stabilizing the protein conformation that binds the tetrahedral intermediate(s) formed during glutamine hydrolysis. Inhibited by the product CTP, via allosteric rather than competitive inhibition. Catalyzes the ATP-dependent amination of UTP to CTP with either L-glutamine or ammonia as the source of nitrogen. Regulates intracellular CTP levels through interactions with the four ribonucleotide triphosphates. The sequence is that of CTP synthase from Coxiella burnetii (strain RSA 331 / Henzerling II).